Here is an 82-residue protein sequence, read N- to C-terminus: Small ribosomal subunit protein bS16 (82 aa).

It belongs to the bacterial ribosomal protein bS16 family.

The polypeptide is Small ribosomal subunit protein bS16 (Enterobacter sp. (strain 638)).